The sequence spans 91 residues: Bacterial microcompartment shell vertex protein PduN (91 aa).

The BMV domain maps to 1–87; it reads MHLARVTGAV…IDLAVVGIVD (87 aa).

It belongs to the CcmL/EutN family. In terms of assembly, homopentamer. Interacts with shell protein PduA.

It localises to the bacterial microcompartment. The protein operates within polyol metabolism; 1,2-propanediol degradation. Functionally, probably forms vertices in the shell of the bacterial microcompartment (BMC) dedicated to 1,2-propanediol (1,2-PD) degradation. Required for structural integrity of BMCs and to mitigate propionaldehyde toxicity. The 1,2-PD-specific bacterial microcompartment (BMC) concentrates low levels of 1,2-PD catabolic enzymes, concentrates volatile reaction intermediates thus enhancing pathway flux and keeps the level of toxic, mutagenic propionaldehyde low. The sequence is that of Bacterial microcompartment shell vertex protein PduN from Salmonella typhimurium (strain LT2 / SGSC1412 / ATCC 700720).